The sequence spans 238 residues: Riboflavin-binding protein (238 aa).

A signal peptide spans 1–17 (MLRFAITLFAVITSSTC). Gln-18 is modified (pyrrolidone carboxylic acid). Disulfide bonds link Cys-22-Cys-49, Cys-41-Cys-90, Cys-50-Cys-94, Cys-74-Cys-155, Cys-81-Cys-127, Cys-116-Cys-186, Cys-120-Cys-169, Cys-133-Cys-151, and Cys-184-Cys-219. Asn-53 carries N-linked (GlcNAc...) asparagine glycosylation. Asn-164 carries an N-linked (GlcNAc...) asparagine glycan. Phosphoserine occurs at positions 204, 205, 208, 209, 210, 212, 213, and 214.

Belongs to the folate receptor family. In terms of processing, plasma and yolk RBPS have the same carbohydrate components, whereas egg-white RBP has a different, ovomucoid-type carbohydrate chain. Post-translationally, plasma RBP has the same C-terminal sequence as the egg-white RBP, which suggests that the C-terminal residues are cleaved off upon incorporation into the oocyte. As to expression, yolk RBP is synthesized in the liver; egg-white RBP is synthesized in the oviduct.

Required for the transport of riboflavin to the developing oocyte. This Gallus gallus (Chicken) protein is Riboflavin-binding protein.